Reading from the N-terminus, the 248-residue chain is Triosephosphate isomerase (248 aa).

A substrate-binding site is contributed by 9 to 11 (NWK). The active-site Electrophile is His-94. Glu-166 functions as the Proton acceptor in the catalytic mechanism. Substrate contacts are provided by residues Gly-172, Ser-212, and 233–234 (GG).

This sequence belongs to the triosephosphate isomerase family. As to quaternary structure, homodimer.

The protein resides in the cytoplasm. It catalyses the reaction D-glyceraldehyde 3-phosphate = dihydroxyacetone phosphate. Its pathway is carbohydrate biosynthesis; gluconeogenesis. It functions in the pathway carbohydrate degradation; glycolysis; D-glyceraldehyde 3-phosphate from glycerone phosphate: step 1/1. Involved in the gluconeogenesis. Catalyzes stereospecifically the conversion of dihydroxyacetone phosphate (DHAP) to D-glyceraldehyde-3-phosphate (G3P). This Clostridium botulinum (strain Eklund 17B / Type B) protein is Triosephosphate isomerase.